Consider the following 222-residue polypeptide: Cytidylate kinase (222 aa).

An ATP-binding site is contributed by 9–17 (GPAGSGKTT).

This sequence belongs to the cytidylate kinase family. Type 1 subfamily.

It localises to the cytoplasm. It catalyses the reaction CMP + ATP = CDP + ADP. It carries out the reaction dCMP + ATP = dCDP + ADP. In Thermosipho africanus (strain TCF52B), this protein is Cytidylate kinase.